A 626-amino-acid chain; its full sequence is Elongation factor 4 (626 aa).

The tr-type G domain maps to 14–195 (SVIRNFCIIA…QIVMDVPAPH (182 aa)). GTP-binding positions include 26 to 31 (DHGKST) and 142 to 145 (NKID). The tract at residues 603-626 (LSTGEDSNDRDTKDKIRAAQKTEG) is disordered. Residues 609–626 (SNDRDTKDKIRAAQKTEG) show a composition bias toward basic and acidic residues.

The protein belongs to the TRAFAC class translation factor GTPase superfamily. Classic translation factor GTPase family. LepA subfamily.

Its subcellular location is the cell membrane. The enzyme catalyses GTP + H2O = GDP + phosphate + H(+). Its function is as follows. Required for accurate and efficient protein synthesis under certain stress conditions. May act as a fidelity factor of the translation reaction, by catalyzing a one-codon backward translocation of tRNAs on improperly translocated ribosomes. Back-translocation proceeds from a post-translocation (POST) complex to a pre-translocation (PRE) complex, thus giving elongation factor G a second chance to translocate the tRNAs correctly. Binds to ribosomes in a GTP-dependent manner. The chain is Elongation factor 4 from Bifidobacterium longum subsp. infantis (strain ATCC 15697 / DSM 20088 / JCM 1222 / NCTC 11817 / S12).